Reading from the N-terminus, the 367-residue chain is Phosphoribosylaminoimidazole-succinocarboxamide synthase (367 aa).

It belongs to the SAICAR synthetase family.

The catalysed reaction is 5-amino-1-(5-phospho-D-ribosyl)imidazole-4-carboxylate + L-aspartate + ATP = (2S)-2-[5-amino-1-(5-phospho-beta-D-ribosyl)imidazole-4-carboxamido]succinate + ADP + phosphate + 2 H(+). Its pathway is purine metabolism; IMP biosynthesis via de novo pathway; 5-amino-1-(5-phospho-D-ribosyl)imidazole-4-carboxamide from 5-amino-1-(5-phospho-D-ribosyl)imidazole-4-carboxylate: step 1/2. In Shewanella piezotolerans (strain WP3 / JCM 13877), this protein is Phosphoribosylaminoimidazole-succinocarboxamide synthase.